The primary structure comprises 372 residues: Biglycan (372 aa).

Residues 1–19 form the signal peptide; it reads MPTMWPLWLLASLLALSQA. Residues 20 to 40 constitute a propeptide that is removed on maturation; the sequence is LPFEQKGFWDFTLDDGLPMLN. O-linked (Xyl...) (glycosaminoglycan) serine glycans are attached at residues serine 45 and serine 51. 2 disulfide bridges follow: cysteine 67–cysteine 73 and cysteine 71–cysteine 80. LRR repeat units follow at residues 86-106, 107-130, 131-154, 155-175, 176-199, 200-224, 225-245, 246-269, 270-293, 294-316, 317-346, and 347-372; these read KAVP…NNEI, SELR…NNKI, SKIH…KNHL, VEIP…DNRI, RKVP…GNPL, ENSG…EAKL, TGIP…HNKI, QAIE…HNQI, RMIE…NNKL, SRVP…TNNI, TKVG…NNPV, and PYWE…NYKK. N-linked (GlcNAc...) asparagine glycosylation is found at asparagine 274 and asparagine 315. A disulfide bridge connects residues cysteine 325 and cysteine 358.

This sequence belongs to the small leucine-rich proteoglycan (SLRP) family. SLRP class I subfamily. Homodimer. Forms a ternary complex with MFAP2 and ELN. Post-translationally, the two attached glycosaminoglycan chains can be either chondroitin sulfate or dermatan sulfate.

The protein localises to the secreted. It localises to the extracellular space. The protein resides in the extracellular matrix. Its function is as follows. May be involved in collagen fiber assembly. In Equus caballus (Horse), this protein is Biglycan (BGN).